The following is a 321-amino-acid chain: Probable transaldolase (321 aa).

Lysine 133 acts as the Schiff-base intermediate with substrate in catalysis.

The protein belongs to the transaldolase family. Type 1 subfamily. In terms of assembly, homodimer.

The protein localises to the cytoplasm. It carries out the reaction D-sedoheptulose 7-phosphate + D-glyceraldehyde 3-phosphate = D-erythrose 4-phosphate + beta-D-fructose 6-phosphate. It functions in the pathway carbohydrate degradation; pentose phosphate pathway; D-glyceraldehyde 3-phosphate and beta-D-fructose 6-phosphate from D-ribose 5-phosphate and D-xylulose 5-phosphate (non-oxidative stage): step 2/3. In terms of biological role, transaldolase is important for the balance of metabolites in the pentose-phosphate pathway. In Dictyostelium discoideum (Social amoeba), this protein is Probable transaldolase (tal).